Consider the following 189-residue polypeptide: Movement protein (189 aa).

It belongs to the tombusvirus/aureusvirus movement protein p22 family. In terms of assembly, interacts with host protein HFI22. Phosphorylated.

Its subcellular location is the host membrane. Functionally, transports viral genome to neighboring plant cells directly through plasmosdesmata, without any budding. The movement protein allows efficient cell to cell propagation, by bypassing the host cell wall barrier. This chain is Movement protein, found in Capsicum annuum (Capsicum pepper).